A 501-amino-acid chain; its full sequence is Ell-associated factor Eaf (501 aa).

Composition is skewed to polar residues over residues 138–149 (NMGQGQLHSQGA) and 173–192 (ENSTMRISTKTKVSTGSRRN). Disordered stretches follow at residues 138 to 226 (NMGQ…PAWD) and 256 to 501 (GHAN…DDDD). 2 stretches are compositionally biased toward low complexity: residues 200–221 (RNSPMQQSSPSRPVPVHRSPQS) and 256–270 (GHANTSGSSTGSATG). Ser202 is subject to Phosphoserine. Residues 271–283 (QTDFGSISSSSHI) show a composition bias toward polar residues. 2 stretches are compositionally biased toward low complexity: residues 302–314 (QRQSPPMAQQQQP) and 329–343 (QQQRQRNSPQQQRPP). A compositionally biased stretch (acidic residues) spans 393–408 (DSSDSDSGSDSDDSTE). 3 stretches are compositionally biased toward low complexity: residues 416–437 (QQPVYQNQNHQQQQMAQQHLNQ), 455–471 (QQQQQQMVPHQQQQKQQ), and 483–501 (NDLLQNDLQLSSNSSDDDD).

The protein belongs to the EAF family.

The protein localises to the nucleus. In terms of biological role, promotes transcriptional elongation by Su(Tpl)/ELL. Essential for development. The sequence is that of Ell-associated factor Eaf from Drosophila yakuba (Fruit fly).